The primary structure comprises 260 residues: uncharacterized protein (260 aa).

6 consecutive transmembrane segments (helical) span residues 39-59 (IFYL…LIEA), 68-88 (IIVG…SFLI), 111-131 (FLGS…FFLG), 159-179 (LIFS…LFKI), 193-213 (FIYL…ILSQ), and 214-234 (FILV…IKLI).

It belongs to the TatC family.

It localises to the mitochondrion membrane. This is an uncharacterized protein from Reclinomonas americana.